The primary structure comprises 231 residues: Translin-associated protein X homolog (231 aa).

This sequence belongs to the translin family.

It is found in the cytoplasm. The protein resides in the nucleus. The polypeptide is Translin-associated protein X homolog (Schizosaccharomyces pombe (strain 972 / ATCC 24843) (Fission yeast)).